A 317-amino-acid chain; its full sequence is Acetyl-coenzyme A carboxylase carboxyl transferase subunit alpha (317 aa).

Residues 31–292 (RFEPELAQLE…DKALWATLTS (262 aa)) enclose the CoA carboxyltransferase C-terminal domain.

It belongs to the AccA family. As to quaternary structure, acetyl-CoA carboxylase is a heterohexamer composed of biotin carboxyl carrier protein (AccB), biotin carboxylase (AccC) and two subunits each of ACCase subunit alpha (AccA) and ACCase subunit beta (AccD).

The protein resides in the cytoplasm. The catalysed reaction is N(6)-carboxybiotinyl-L-lysyl-[protein] + acetyl-CoA = N(6)-biotinyl-L-lysyl-[protein] + malonyl-CoA. It participates in lipid metabolism; malonyl-CoA biosynthesis; malonyl-CoA from acetyl-CoA: step 1/1. Its function is as follows. Component of the acetyl coenzyme A carboxylase (ACC) complex. First, biotin carboxylase catalyzes the carboxylation of biotin on its carrier protein (BCCP) and then the CO(2) group is transferred by the carboxyltransferase to acetyl-CoA to form malonyl-CoA. The chain is Acetyl-coenzyme A carboxylase carboxyl transferase subunit alpha from Sorangium cellulosum (strain So ce56) (Polyangium cellulosum (strain So ce56)).